The sequence spans 468 residues: UDP-N-acetylmuramate--L-alanine ligase (468 aa).

Residue 122-128 coordinates ATP; that stretch reads GSHGKTT.

Belongs to the MurCDEF family.

Its subcellular location is the cytoplasm. The enzyme catalyses UDP-N-acetyl-alpha-D-muramate + L-alanine + ATP = UDP-N-acetyl-alpha-D-muramoyl-L-alanine + ADP + phosphate + H(+). The protein operates within cell wall biogenesis; peptidoglycan biosynthesis. Functionally, cell wall formation. This is UDP-N-acetylmuramate--L-alanine ligase from Synechococcus sp. (strain CC9902).